We begin with the raw amino-acid sequence, 346 residues long: Phosphate acyltransferase (346 aa).

This sequence belongs to the PlsX family. As to quaternary structure, homodimer. Probably interacts with PlsY.

Its subcellular location is the cytoplasm. The catalysed reaction is a fatty acyl-[ACP] + phosphate = an acyl phosphate + holo-[ACP]. It functions in the pathway lipid metabolism; phospholipid metabolism. Its function is as follows. Catalyzes the reversible formation of acyl-phosphate (acyl-PO(4)) from acyl-[acyl-carrier-protein] (acyl-ACP). This enzyme utilizes acyl-ACP as fatty acyl donor, but not acyl-CoA. This Geotalea uraniireducens (strain Rf4) (Geobacter uraniireducens) protein is Phosphate acyltransferase.